A 459-amino-acid chain; its full sequence is Serine permease SerP1 (459 aa).

12 consecutive transmembrane segments (helical) span residues 19–39 (IQLIAIAGTIGTGLFLGAGKT), 42–62 (MTGPSVIFAYILIGIAMFFFL), 97–117 (SYWLVIVFVCISELTAIGTYI), 119–139 (FWLPHLPLWLIEIVMLALLFG), 153–173 (FWFAMIKVAAILGMIVTAIIL), 212–232 (FVGALQMVMFAFTSMEFIGMT), 254–274 (ILLFYVGALLAIMAIFNWHYI), 281–301 (FVIVFQLIGIKWAAALINFVV), 341–361 (AGIPINALYMATALSLLAPVL), 370–390 (AFNFAASCTTNLFLVVYFITL), 412–432 (PTIAVPFIAIIFAIVFASLFF), and 436–456 (TFYPALGAIVWTLIFGLYSHF).

Belongs to the amino acid-polyamine-organocation (APC) superfamily. Amino acid transporter (AAT) (TC 2.A.3.1) family.

The protein resides in the cell membrane. Its function is as follows. Transports L-serine, L-threonine and L-cysteine with high affinity. Stereoselective, with a strong preference for L-serine. Is the main L-serine transporter and is responsible for optimal growth in media containing free amino acids as the sole source of amino acids. Is also the main transporter for L-threonine. The sequence is that of Serine permease SerP1 from Lactococcus lactis subsp. cremoris (strain MG1363).